Consider the following 285-residue polypeptide: MKYIGAHVSAAGGLANAPARAAEIGATAFALFTKNQRQWRAAPLTPQVIDDFKIACEKYLFSAAQILPHDSYLINLGHPVSEALEKSRDAFLDEMQRCEQLGLTLLNFHPGSHLMQIAQEDCLARIAESINIALAQTEGVTAVIENTAGQGSNLGFEFEQLAAIIDGVEDKSRVGVCIDTCHAFAAGYDLRTPEACEKTFAEFGKIVGFQYLRGMHLNDAKSAFGSRVDRHHSLGEGNIGHDAFRWIMQDGRFDGIPLILETINPDIWAEEIAWLKAQQIAEAVA.

Zn(2+)-binding residues include histidine 69, histidine 109, glutamate 145, aspartate 179, histidine 182, histidine 216, aspartate 229, histidine 231, and glutamate 261.

Belongs to the AP endonuclease 2 family. Zn(2+) is required as a cofactor.

It carries out the reaction Endonucleolytic cleavage to 5'-phosphooligonucleotide end-products.. Functionally, endonuclease IV plays a role in DNA repair. It cleaves phosphodiester bonds at apurinic or apyrimidinic (AP) sites, generating a 3'-hydroxyl group and a 5'-terminal sugar phosphate. The chain is Probable endonuclease 4 from Salmonella newport (strain SL254).